Here is a 1052-residue protein sequence, read N- to C-terminus: RIMS-binding protein 2 (1052 aa).

Positions 115 to 164 are disordered; the sequence is GEYIRPLPQPGDRPEPLSAKPTFLSRSGSARCRSESDMENERNSNTSKQR. A compositionally biased stretch (basic and acidic residues) spans 146-156; that stretch reads CRSESDMENER. Residues 167–234 enclose the SH3 1 domain; it reads GKVHLCVARY…PSNFVDFVQD (68 aa). 3 Fibronectin type-III domains span residues 297-390, 393-475, and 489-590; these read VPYP…GKDV, APSH…KKEA, and PPQD…VPPT. 5 disordered regions span residues 584 to 615, 629 to 666, 697 to 716, 767 to 787, and 805 to 829; these read ELLV…DEHL, RAPG…PVST, SAGQ…PDFK, EMQL…NALK, and FPRG…YGRD. Positions 585-598 are enriched in pro residues; that stretch reads LLVPPTPHPRPAPQ. Residues 645–654 show a composition bias toward low complexity; that stretch reads PGRRSPSPSR. A phosphoserine mark is found at serine 704 and serine 712. 2 positions are modified to phosphoserine: serine 832 and serine 839. At threonine 841 the chain carries Phosphothreonine. SH3 domains lie at 848–916 and 952–1019; these read LPAR…EIQA and VSTR…EVPD. The disordered stretch occupies residues 1029-1052; sequence PSHYSQDTPMRSKAKRKKSVHFTP. Over residues 1040–1052 the composition is skewed to basic residues; it reads SKAKRKKSVHFTP.

It belongs to the RIMBP family. Interacts with RIMS1, RIMS2, CACNA1D and CACNA1B, and potentially with other Ca(2+) channel alpha-1 isoforms.

Its subcellular location is the cell membrane. The protein localises to the synapse. Plays a role in the synaptic transmission as bifunctional linker that interacts simultaneously with RIMS1, RIMS2, CACNA1D and CACNA1B. This is RIMS-binding protein 2 (RIMBP2) from Homo sapiens (Human).